The following is a 200-amino-acid chain: Small ribosomal subunit protein mS38 (200 aa).

It belongs to the mitochondrion-specific ribosomal protein mS38 family. As to quaternary structure, component of the mitochondrial ribosome small subunit (28S) which comprises a 12S rRNA and about 30 distinct proteins. Interacts with Aurora-A. As to expression, ubiquitously expressed and especially highly expressed in heart, skeletal muscle and testis.

It localises to the mitochondrion matrix. The protein localises to the nucleus. May act as a negative regulator of Aurora-A kinase, by down-regulation through proteasome-dependent degradation. The polypeptide is Small ribosomal subunit protein mS38 (Aurkaip1) (Mus musculus (Mouse)).